The following is a 379-amino-acid chain: UPF0450 protein C17orf58 homolog (379 aa).

The N-terminal stretch at 1–17 (MIPALTVPLLFLCATSA) is a signal peptide. Disordered stretches follow at residues 76–95 (RTRATHPQRQGQDLALPDKT) and 162–194 (TASQNLQGRKYSRNNDYGSMDHESNRPGKMNPH). Residues 180–194 (SMDHESNRPGKMNPH) show a composition bias toward basic and acidic residues. Intrachain disulfides connect cysteine 234–cysteine 308, cysteine 238–cysteine 312, and cysteine 249–cysteine 378. Positions 234–378 (CIAECHRDKD…KVLAAAHSKC (145 aa)) constitute an NTR domain.

It belongs to the UPF0450 family.

The chain is UPF0450 protein C17orf58 homolog from Xenopus laevis (African clawed frog).